The sequence spans 274 residues: Large ribosomal subunit protein uL2 (274 aa).

Residues 223-274 (VAMNPVDHPHGGGEGRTSGGRHPVTPWGVPTKGYKTRSNKRTDKYIVRRRNK) are disordered.

This sequence belongs to the universal ribosomal protein uL2 family. Part of the 50S ribosomal subunit. Forms a bridge to the 30S subunit in the 70S ribosome.

Its function is as follows. One of the primary rRNA binding proteins. Required for association of the 30S and 50S subunits to form the 70S ribosome, for tRNA binding and peptide bond formation. It has been suggested to have peptidyltransferase activity; this is somewhat controversial. Makes several contacts with the 16S rRNA in the 70S ribosome. The polypeptide is Large ribosomal subunit protein uL2 (Shewanella sp. (strain ANA-3)).